A 359-amino-acid polypeptide reads, in one-letter code: Alpha-2-HS-glycoprotein (359 aa).

An N-terminal signal peptide occupies residues M1–S18. Residues Y27–D133 form the Cystatin fetuin-A-type 1 domain. Disulfide bonds link C32-C350, C89-C100, C114-C132, C146-C149, C208-C219, and C230-C248. N99 is a glycosylation site (N-linked (GlcNAc...) asparagine). Phosphoserine occurs at positions 134, 135, and 138. The 113-residue stretch at K144–V256 folds into the Cystatin fetuin-A-type 2 domain. N-linked (GlcNAc...) asparagine glycosylation is found at N156 and N176. The disordered stretch occupies residues I257–G285. O-linked (GalNAc...) serine glycosylation is present at S271. The span at A276–G285 shows a compositional bias: low complexity. A glycan (O-linked (GalNAc...) threonine) is linked at T280. O-linked (GalNAc...) serine glycosylation is found at S282 and S296. Residue T314 is modified to Phosphothreonine. 4 positions are modified to phosphoserine: S316, S320, S323, and S325. The O-linked (GalNAc...) threonine glycan is linked to T334. The O-linked (GalNAc...) serine; partial glycan is linked to S341.

This sequence belongs to the fetuin family. Post-translationally, phosphorylated by FAM20C in the extracellular medium. As to expression, liver and bone.

The protein resides in the secreted. Its function is as follows. Promotes endocytosis, possesses opsonic properties and influences the mineral phase of bone. Suggested to have lymphocyte stimulating properties, lipid binding capability and to bind thyroid hormone. The sequence is that of Alpha-2-HS-glycoprotein (AHSG) from Bos taurus (Bovine).